Here is a 970-residue protein sequence, read N- to C-terminus: Protein tweety (970 aa).

Residues 1 to 47 are Extracellular-facing; the sequence is MGDYHEFTDQYKVPVIAKLLHALPHYNITFHKINSTFRPNDEIYLES. N-linked (GlcNAc...) asparagine glycosylation is found at N27 and N34. A helical membrane pass occupies residues 48–68; sequence LGILGSVPAALLIVSLLGLLF. Residues 69 to 89 lie on the Cytoplasmic side of the membrane; it reads YLMTRCCDRKPRPAHSITSLK. Residues 90–110 form a helical membrane-spanning segment; the sequence is VALSIVTVMCCAAIGLGLYGN. Over 111 to 219 the chain is Extracellular; the sequence is DDLHNGLLEV…GDQWELIRWP (109 aa). N-linked (GlcNAc...) asparagine glycosylation is found at N136, N166, and N183. The helical transmembrane segment at 220 to 240 threads the bilayer; the sequence is GTVATLALLLVLCAVLLVGVA. Over 241-246 the chain is Cytoplasmic; that stretch reads RHSRCA. Residues 247-267 traverse the membrane as a helical segment; it reads LILFSVCGLLAVTGSWLMSGL. Residues 268–395 lie on the Extracellular side of the membrane; it reads YLSSSVAVGD…RGLCEGGLLG (128 aa). N359 carries N-linked (GlcNAc...) asparagine glycosylation. A helical transmembrane segment spans residues 396 to 416; it reads LVLMLIASFIAAILLTIMVWV. Topologically, residues 417-970 are cytoplasmic; sequence DSHTWIYIRK…DESNYAVTEL (554 aa). Over residues 532–571 the composition is skewed to low complexity; sequence NAAANMPPTTQAAQQQQQQQAQQQQQQAQQQLGGPQPIYC. 3 disordered regions span residues 532-587, 677-763, and 849-970; these read NAAA…QHPH, RQNS…NESD, and MKAI…VTEL. Residues 572 to 587 are compositionally biased toward basic residues; sequence HHPHQHPHPHPHQHPH. Low complexity-rich tracts occupy residues 689-700, 707-737, and 745-759; these read HQHPPSLHQQQQ, QQQQQLHQLKSPQQHQQQLQQHQQQQQQQHH, and QHQQQQQQHHQQQQP. The span at 852–868 shows a compositional bias: pro residues; it reads IPPPRIGTPTSPPPPVA. Gly residues-rich tracts occupy residues 883 to 894 and 931 to 945; these read QNGGAVVGGGGA and NGGGGGSVGGGGGGA. Residues 961–970 are compositionally biased toward polar residues; the sequence is DESNYAVTEL.

This sequence belongs to the tweety family.

The protein resides in the cell membrane. In terms of biological role, non-essential protein that probably acts as a chloride channel. This Drosophila melanogaster (Fruit fly) protein is Protein tweety (tty).